The primary structure comprises 163 residues: Inner membrane protein YcdZ (163 aa).

Residues 1-2 (MN) are Cytoplasmic-facing. Residues 3-23 (ILLSIAITTGILSGIWGWVAV) form a helical membrane-spanning segment. A topological domain (periplasmic) is located at residue serine 24. A helical transmembrane segment spans residues 25–45 (LGLLSWAGFLGCTAYFACPQG). Over 46–48 (GLK) the chain is Cytoplasmic. A helical membrane pass occupies residues 49–69 (GLAISAATLLSGVVWAMVIIY). The Periplasmic portion of the chain corresponds to 70–71 (GS). Residues 72–92 (ALAPHLEILGYVITGIVAFLM) form a helical membrane-spanning segment. The Cytoplasmic portion of the chain corresponds to 93 to 98 (CIQAKQ). Residues 99–119 (LLLSFVPGTFIGACATFAGQG) form a helical membrane-spanning segment. Residues 120-122 (DWK) lie on the Periplasmic side of the membrane. A helical transmembrane segment spans residues 123-143 (LVLPSLALGLIFGYAMKNSGL). Residues 144-163 (WLAARSAKTAHREQEIKNKA) are Cytoplasmic-facing.

To E.coli YahC.

It is found in the cell inner membrane. This chain is Inner membrane protein YcdZ (ycdZ), found in Escherichia coli (strain K12).